A 74-amino-acid polypeptide reads, in one-letter code: MEGELAHIGAGLAAIGSGAAAIGVGNVAGNYLAGALRNPSAAASQTATLFIGIAFAEALGIFAFLVALLLMFAV.

The next 2 membrane-spanning stretches (helical) occupy residues 5–25 (LAHIGAGLAAIGSGAAAIGVG) and 49–69 (LFIGIAFAEALGIFAFLVALL).

This sequence belongs to the ATPase C chain family. As to quaternary structure, F-type ATPases have 2 components, F(1) - the catalytic core - and F(0) - the membrane proton channel. F(1) has five subunits: alpha(3), beta(3), gamma(1), delta(1), epsilon(1). F(0) has four main subunits: a(1), b(1), b'(1) and c(10-14). The alpha and beta chains form an alternating ring which encloses part of the gamma chain. F(1) is attached to F(0) by a central stalk formed by the gamma and epsilon chains, while a peripheral stalk is formed by the delta, b and b' chains.

It localises to the cell inner membrane. Functionally, f(1)F(0) ATP synthase produces ATP from ADP in the presence of a proton or sodium gradient. F-type ATPases consist of two structural domains, F(1) containing the extramembraneous catalytic core and F(0) containing the membrane proton channel, linked together by a central stalk and a peripheral stalk. During catalysis, ATP synthesis in the catalytic domain of F(1) is coupled via a rotary mechanism of the central stalk subunits to proton translocation. Key component of the F(0) channel; it plays a direct role in translocation across the membrane. A homomeric c-ring of between 10-14 subunits forms the central stalk rotor element with the F(1) delta and epsilon subunits. This is ATP synthase subunit c from Roseobacter denitrificans (strain ATCC 33942 / OCh 114) (Erythrobacter sp. (strain OCh 114)).